A 448-amino-acid polypeptide reads, in one-letter code: uncharacterized protein (448 aa).

Residues 1-50 are Extracellular-facing; sequence MAPEIFVKFKCASRDIKLLWASVFLRLLSYGLTNQVLTLFLNAINMTEDK. A helical transmembrane segment spans residues 51 to 71; that stretch reads IGLFMSLTLAGDVICSYILTW. Topologically, residues 72–93 are cytoplasmic; it reads YADSWGRRRVLVYGCAMMLLSG. A helical transmembrane segment spans residues 94 to 114; that stretch reads LVFSFSENFTLLLVFAIFGVI. At 115-146 the chain is on the extracellular side; that stretch reads SPSSDEVGPFKSIEEAMIAHLSPHNARPEIYA. A helical membrane pass occupies residues 147 to 167; sequence IHALVGTIGSALGAIICGIFV. The Cytoplasmic portion of the chain corresponds to 168–184; the sequence is DLLKRTGLAATDLQCYK. The helical transmembrane segment at 185–205 threads the bilayer; it reads LVFLLYAFFAFCKMVIMLLLS. The Extracellular portion of the chain corresponds to 206 to 260; sequence DATELDGHYEHTDCNEETAEPLDVNDETAPLMRQATHPEERSNKLSKETVSVLMK. A helical transmembrane segment spans residues 261–281; it reads LLVIFMVDSLGSGFMTSGWMV. Residues 282 to 287 are Cytoplasmic-facing; that stretch reads YYYSKQ. Residues 288 to 308 form a helical membrane-spanning segment; sequence FLMGSLALGTLFFITQLVMAS. The Extracellular segment spans residues 309-333; the sequence is STIPSSIIARCFGPVRATLLVQIPS. A helical transmembrane segment spans residues 334–354; that stretch reads GIFSILIPMAKNYLPLSILFL. Residues 355-386 are Cytoplasmic-facing; that stretch reads NLHFATTAMDVTPRQILLTNIIKPRDLTKVMG. ATP is bound at residue 386 to 393; sequence GVVNIGKT. Residues 387–407 traverse the membrane as a helical segment; the sequence is VVNIGKTFARCVGPIFTGILA. Residues 408 to 416 are Extracellular-facing; the sequence is NNNYLWLCY. Residues 417 to 437 form a helical membrane-spanning segment; the sequence is IISGSLVITADLILACMFLGV. Residues 438–448 are Cytoplasmic-facing; the sequence is DAKIKKQMNRH.

The protein localises to the membrane. This is an uncharacterized protein from Saccharomyces cerevisiae (strain ATCC 204508 / S288c) (Baker's yeast).